The primary structure comprises 505 residues: Zinc metalloproteinase/disintegrin (505 aa).

An N-terminal signal peptide occupies residues 1-20 (MIQVLLVIICLAAFPYQGTS). A propeptide spanning residues 21–214 (IILESGNVND…PIKKASQSNL (194 aa)) is cleaved from the precursor. Repeat copies occupy residues 153 to 179 (KYED…YEPI) and 180 to 206 (KYED…YEPI). The 197-residue stretch at 220-416 (RYIELVIVAD…QKPQCILNKP (197 aa)) folds into the Peptidase M12B domain. Ca(2+) contacts are provided by glutamate 223 and aspartate 307. Histidine 356 is a binding site for Zn(2+). Residue glutamate 357 is part of the active site. Residues histidine 360 and histidine 366 each contribute to the Zn(2+) site. Intrachain disulfides connect cysteine 371–cysteine 395 and cysteine 373–cysteine 378. Positions 411 and 414 each coordinate Ca(2+). Residues 417–432 (LRTDTVSTPVSGNELL) constitute a propeptide that is removed on maturation. The Disintegrin domain maps to 424–505 (TPVSGNELLE…AGCPRNPFHA (82 aa)). Disulfide bonds link cysteine 438-cysteine 453, cysteine 440-cysteine 448, cysteine 447-cysteine 470, cysteine 461-cysteine 467, cysteine 466-cysteine 491, and cysteine 479-cysteine 498. The Cell attachment site motif lies at 483-485 (RGD).

Belongs to the venom metalloproteinase (M12B) family. P-II subfamily. P-IIa sub-subfamily. In terms of assembly, monomer. Zn(2+) serves as cofactor. Expressed by the venom gland.

Its subcellular location is the secreted. Impairs hemostasis in the envenomed animal. In terms of biological role, inhibits platelet aggregation induced by ADP, thrombin, platelet-activating factor and collagen. Acts by inhibiting fibrinogen interaction with platelet receptors GPIIb/GPIIIa (ITGA2B/ITGB3). In Gloydius brevicauda (Korean slamosa snake), this protein is Zinc metalloproteinase/disintegrin.